The primary structure comprises 273 residues: Undecaprenyl-diphosphatase (273 aa).

Helical transmembrane passes span 7 to 27 (LWIAAILGLVEGLTEFLPVSS), 45 to 65 (AETFEVVIQLGSILAVVVMFW), 89 to 109 (LTLIHILLGMVPAVVIGLLLH), 115 to 135 (LFNPVNVMYALVVGGVLLIAA), 152 to 171 (TYRQAFMIGCFQCLALWPGF), 189 to 209 (YAASEFSFLLAVPMMIGATGL), 221 to 241 (ADFPMFAVGFVTAFIVALIAI), and 253 to 273 (FIPFAIYRFIVAAAVYALFVL).

Belongs to the UppP family.

It localises to the cell inner membrane. The enzyme catalyses di-trans,octa-cis-undecaprenyl diphosphate + H2O = di-trans,octa-cis-undecaprenyl phosphate + phosphate + H(+). In terms of biological role, catalyzes the dephosphorylation of undecaprenyl diphosphate (UPP). Confers resistance to bacitracin. The polypeptide is Undecaprenyl-diphosphatase (Erwinia tasmaniensis (strain DSM 17950 / CFBP 7177 / CIP 109463 / NCPPB 4357 / Et1/99)).